The primary structure comprises 282 residues: Cytochrome c1 (282 aa).

Residues 1–24 (MTIKLRFVASLALVFGLAAASVPA) form the signal peptide. Heme c-binding residues include C62, C65, H66, and M207. Residues 253–273 (WWVLGFLVIFTGLLVATKIVV) traverse the membrane as a helical segment.

As to quaternary structure, the main subunits of complex b-c1 are: cytochrome b, cytochrome c1 and the Rieske protein. Binds 1 heme c group covalently per subunit.

The protein resides in the cell membrane. Its function is as follows. Component of the ubiquinol-cytochrome c reductase complex (complex III or cytochrome b-c1 complex), which is a respiratory chain that generates an electrochemical potential coupled to ATP synthesis. c1 functions as an electron donor to cytochrome c. This Blastochloris viridis (Rhodopseudomonas viridis) protein is Cytochrome c1 (petC).